The chain runs to 200 residues: 2-phospho-L-lactate guanylyltransferase (200 aa).

The protein belongs to the CofC family. In terms of assembly, homodimer.

The catalysed reaction is (2S)-2-phospholactate + GTP + H(+) = (2S)-lactyl-2-diphospho-5'-guanosine + diphosphate. Its pathway is cofactor biosynthesis; coenzyme F420 biosynthesis. Guanylyltransferase that catalyzes the activation of (2S)-2-phospholactate (2-PL) as (2S)-lactyl-2-diphospho-5'-guanosine, via the condensation of 2-PL with GTP. It is involved in the biosynthesis of coenzyme F420, a hydride carrier cofactor. This Ferroglobus placidus (strain DSM 10642 / AEDII12DO) protein is 2-phospho-L-lactate guanylyltransferase.